Here is a 372-residue protein sequence, read N- to C-terminus: Cytochrome b (372 aa).

4 consecutive transmembrane segments (helical) span residues Phe-25–Leu-45, Trp-69–Ile-90, Trp-105–Leu-125, and Phe-170–Ile-190. Positions 75 and 89 each coordinate heme b. The heme b site is built by His-174 and His-188. Residue His-193 participates in a ubiquinone binding. A run of 4 helical transmembrane segments spans residues Tyr-218 to Ala-238, Leu-280 to His-300, Leu-312 to Ser-332, and Phe-339 to Pro-358.

Belongs to the cytochrome b family. The cytochrome bc1 complex contains 3 respiratory subunits (MT-CYB, CYC1 and UQCRFS1), 2 core proteins (UQCRC1 and UQCRC2) and probably 6 low-molecular weight proteins. Heme b serves as cofactor.

The protein localises to the mitochondrion inner membrane. Functionally, component of the ubiquinol-cytochrome c reductase complex (complex III or cytochrome b-c1 complex) that is part of the mitochondrial respiratory chain. The b-c1 complex mediates electron transfer from ubiquinol to cytochrome c. Contributes to the generation of a proton gradient across the mitochondrial membrane that is then used for ATP synthesis. In Naja nivea (Cape cobra), this protein is Cytochrome b (MT-CYB).